The following is a 240-amino-acid chain: Uridylate kinase (240 aa).

13 to 16 contacts ATP; it reads KFSG. Residue G55 coordinates UMP. ATP-binding residues include G56 and R60. UMP contacts are provided by residues D76 and 137 to 144; that span reads TGNPFFTT. Positions 164, 170, and 173 each coordinate ATP.

It belongs to the UMP kinase family. As to quaternary structure, homohexamer.

The protein localises to the cytoplasm. It carries out the reaction UMP + ATP = UDP + ADP. It functions in the pathway pyrimidine metabolism; CTP biosynthesis via de novo pathway; UDP from UMP (UMPK route): step 1/1. With respect to regulation, inhibited by UTP. In terms of biological role, catalyzes the reversible phosphorylation of UMP to UDP. This Helicobacter pylori (strain ATCC 700392 / 26695) (Campylobacter pylori) protein is Uridylate kinase.